The chain runs to 677 residues: WD repeat-containing protein 43 (677 aa).

WD repeat units follow at residues 11–51, 57–119, 124–163, 166–205, 207–259, and 267–309; these read PLAP…LHQE, HLSG…LHSK, GHDN…VKCK, GDNS…RHFT, HATP…KEKS, and TDEP…YCKK. The residue at position 77 (Ser77) is a Phosphoserine. Lys309 is covalently cross-linked (Glycyl lysine isopeptide (Lys-Gly) (interchain with G-Cter in SUMO1); alternate). Lys309 is covalently cross-linked (Glycyl lysine isopeptide (Lys-Gly) (interchain with G-Cter in SUMO2); alternate). Phosphothreonine is present on Thr321. A Glycyl lysine isopeptide (Lys-Gly) (interchain with G-Cter in SUMO1); alternate cross-link involves residue Lys384. Residue Lys384 forms a Glycyl lysine isopeptide (Lys-Gly) (interchain with G-Cter in SUMO2); alternate linkage. Thr394 carries the post-translational modification Phosphothreonine. Phosphoserine is present on residues Ser399, Ser431, Ser437, and Ser590. Disordered regions lie at residues 414–445 and 582–677; these read AIKP…LGAM and SEKT…SEEE. Positions 582–592 are enriched in polar residues; it reads SEKTKGATSPG. Over residues 600–652 the composition is skewed to acidic residues; the sequence is EEESSEEESDDEIADKDSEDNWDEDEEESESEKDEDVEEEDEDAEGKDEENGE. Positions 653 to 663 are enriched in basic and acidic residues; that stretch reads DRDTASEKELN. At Thr656 the chain carries Phosphothreonine. Ser658 carries the post-translational modification Phosphoserine. A compositionally biased stretch (acidic residues) spans 664-677; that stretch reads GDSDLDPENESEEE.

This sequence belongs to the UTP5 family. As to quaternary structure, part of the small subunit (SSU) processome, composed of more than 70 proteins and the RNA chaperone small nucleolar RNA (snoRNA) U3. May be a component of the proposed t-UTP subcomplex of the ribosomal small subunit (SSU) processome containing at least UTP4, WDR43, HEATR1, UTP15, WDR75. Binds to RNA; binding is required for its chromatin association. Interacts with CDK9, DDX21 and SUPT6H. Interacts with RNA polymerase II. Interacts directly with UTP4 and UTP15.

Its subcellular location is the nucleus. It is found in the nucleolus. The protein resides in the nucleolus fibrillar center. It localises to the nucleoplasm. Functionally, ribosome biogenesis factor that coordinates hyperactive transcription and ribogenesis. Part of the small subunit (SSU) processome, first precursor of the small eukaryotic ribosomal subunit. During the assembly of the SSU processome in the nucleolus, many ribosome biogenesis factors, an RNA chaperone and ribosomal proteins associate with the nascent pre-rRNA and work in concert to generate RNA folding, modifications, rearrangements and cleavage as well as targeted degradation of pre-ribosomal RNA by the RNA exosome. Involved in nucleolar processing of pre-18S ribosomal RNA. Required for optimal pre-ribosomal RNA transcription by RNA polymerase I. Essential for stem cell pluripotency and embryonic development. In the nucleoplasm, recruited by promoter-associated/nascent transcripts and transcription to active promoters where it facilitates releases of elongation factor P-TEFb and paused RNA polymerase II to allow transcription elongation and maintain high-level expression of its targets genes. The chain is WD repeat-containing protein 43 from Homo sapiens (Human).